The sequence spans 201 residues: Large ribosomal subunit protein uL4 (201 aa).

The tract at residues 45 to 71 (AQKTRAEVTGSGKKPWRQKGTGRARAG) is disordered.

Belongs to the universal ribosomal protein uL4 family. As to quaternary structure, part of the 50S ribosomal subunit.

Functionally, one of the primary rRNA binding proteins, this protein initially binds near the 5'-end of the 23S rRNA. It is important during the early stages of 50S assembly. It makes multiple contacts with different domains of the 23S rRNA in the assembled 50S subunit and ribosome. Forms part of the polypeptide exit tunnel. This is Large ribosomal subunit protein uL4 from Shewanella loihica (strain ATCC BAA-1088 / PV-4).